Here is a 221-residue protein sequence, read N- to C-terminus: Factor arrest protein 7 (221 aa).

In terms of assembly, component of a complex at least composed of FAR3, FAR7, FAR8, FAR10, FAR11 and VPS64.

Its function is as follows. Participates in the control of the reentry into the cell cycle following pheromone treatment. The chain is Factor arrest protein 7 (FAR7) from Saccharomyces cerevisiae (strain ATCC 204508 / S288c) (Baker's yeast).